The primary structure comprises 647 residues: 1-deoxy-D-xylulose-5-phosphate synthase (647 aa).

Thiamine diphosphate is bound by residues histidine 88 and 129–131 (GHA). Aspartate 160 contributes to the Mg(2+) binding site. Thiamine diphosphate is bound by residues 161-162 (GA), asparagine 189, tyrosine 300, and glutamate 377. Asparagine 189 contributes to the Mg(2+) binding site.

Belongs to the transketolase family. DXPS subfamily. Homodimer. Mg(2+) is required as a cofactor. It depends on thiamine diphosphate as a cofactor.

It catalyses the reaction D-glyceraldehyde 3-phosphate + pyruvate + H(+) = 1-deoxy-D-xylulose 5-phosphate + CO2. It functions in the pathway metabolic intermediate biosynthesis; 1-deoxy-D-xylulose 5-phosphate biosynthesis; 1-deoxy-D-xylulose 5-phosphate from D-glyceraldehyde 3-phosphate and pyruvate: step 1/1. Functionally, catalyzes the acyloin condensation reaction between C atoms 2 and 3 of pyruvate and glyceraldehyde 3-phosphate to yield 1-deoxy-D-xylulose-5-phosphate (DXP). The sequence is that of 1-deoxy-D-xylulose-5-phosphate synthase from Dehalococcoides mccartyi (strain ATCC BAA-2266 / KCTC 15142 / 195) (Dehalococcoides ethenogenes (strain 195)).